The chain runs to 330 residues: 5'-AMP-activated protein kinase subunit gamma-1 (330 aa).

Residues 1 to 13 (METVTSSDSSSAV) show a composition bias toward polar residues. The segment at 1-26 (METVTSSDSSSAVENEHPQDTPESNN) is disordered. CBS domains follow at residues 43–103 (PTSS…KSAL), 125–187 (SFKP…PKPE), and 198–260 (IGTY…NLDV). Residues arginine 70, 85–90 (MLTITD), valine 130, 151–152 (HR), and lysine 170 each bind ADP. AMP contacts are provided by residues arginine 70, 85–90 (MLTITD), valine 130, histidine 151, 151–152 (HR), lysine 170, threonine 200, alanine 205, 226–227 (SA), and 242–245 (SKFD). ATP is bound by residues arginine 70, 85–90 (MLTITD), valine 130, 151–152 (HR), arginine 152, and lysine 170. Positions 138–159 (LFDAVSSLIRNKIHRLPVIDPE) match the AMPK pseudosubstrate motif. 242–245 (SKFD) is a binding site for ADP. ATP is bound at residue 242–245 (SKFD). A Phosphoserine; by ULK1 modification is found at serine 261. Residue threonine 263 is modified to Phosphothreonine; by ULK1. Arginine 269 is a binding site for ADP. Arginine 269 is a binding site for AMP. An ATP-binding site is contributed by arginine 269. A Phosphoserine; by ULK1 modification is found at serine 270. Positions 272–329 (YFEGVLKCYLHETLETIINRLVEAEVHRLVVVDENDVVKGIVSLSDILQALVLTGGEK) constitute a CBS 4 domain. ADP is bound by residues leucine 277 and 298–299 (HR). AMP is bound by residues leucine 277, histidine 298, 298–299 (HR), and 314–317 (SLSD). Residues leucine 277 and 298-299 (HR) each bind ATP.

The protein belongs to the 5'-AMP-activated protein kinase gamma subunit family. In terms of assembly, AMPK is a heterotrimer of an alpha catalytic subunit (PRKAA1 or PRKAA2), a beta (PRKAB1 or PRKAB2) and a gamma non-catalytic subunits (PRKAG1, PRKAG2 or PRKAG3). Interacts with FNIP1 and FNIP2. In terms of processing, phosphorylated by ULK1 and ULK2; leading to negatively regulate AMPK activity and suggesting the existence of a regulatory feedback loop between ULK1, ULK2 and AMPK. Glycosylated; O-GlcNAcylated by OGT, promoting the AMP-activated protein kinase (AMPK) activity.

In terms of biological role, AMP/ATP-binding subunit of AMP-activated protein kinase (AMPK), an energy sensor protein kinase that plays a key role in regulating cellular energy metabolism. In response to reduction of intracellular ATP levels, AMPK activates energy-producing pathways and inhibits energy-consuming processes: inhibits protein, carbohydrate and lipid biosynthesis, as well as cell growth and proliferation. AMPK acts via direct phosphorylation of metabolic enzymes, and by longer-term effects via phosphorylation of transcription regulators. Also acts as a regulator of cellular polarity by remodeling the actin cytoskeleton; probably by indirectly activating myosin. Gamma non-catalytic subunit mediates binding to AMP, ADP and ATP, leading to activate or inhibit AMPK: AMP-binding results in allosteric activation of alpha catalytic subunit (PRKAA1 or PRKAA2) both by inducing phosphorylation and preventing dephosphorylation of catalytic subunits. ADP also stimulates phosphorylation, without stimulating already phosphorylated catalytic subunit. ATP promotes dephosphorylation of catalytic subunit, rendering the AMPK enzyme inactive. The protein is 5'-AMP-activated protein kinase subunit gamma-1 (PRKAG1) of Sus scrofa (Pig).